A 320-amino-acid polypeptide reads, in one-letter code: Nodulation efficiency protein NfeD (320 aa).

It belongs to the ornithine cyclodeaminase/mu-crystallin family.

Its function is as follows. Seems to be involved in the nodulation efficiency of R.meliloti GR4 on alfalfa roots. The chain is Nodulation efficiency protein NfeD from Rhizobium meliloti (Ensifer meliloti).